Reading from the N-terminus, the 347-residue chain is NADH-ubiquinone oxidoreductase chain 2 (347 aa).

Transmembrane regions (helical) follow at residues 3 to 23 (PPIF…VLIS), 25 to 45 (HWLL…PILM), 59 to 79 (YFLT…INLL), 111 to 131 (FHFW…MILL), 149 to 169 (INPN…GWGG), 200 to 220 (LMHL…MLFM), 242 to 262 (LLIL…GFIP), 274 to 294 (NMII…YFYM), and 325 to 345 (LLPP…MMLI).

This sequence belongs to the complex I subunit 2 family. In terms of assembly, core subunit of respiratory chain NADH dehydrogenase (Complex I) which is composed of 45 different subunits. Interacts with TMEM242.

Its subcellular location is the mitochondrion inner membrane. It carries out the reaction a ubiquinone + NADH + 5 H(+)(in) = a ubiquinol + NAD(+) + 4 H(+)(out). Functionally, core subunit of the mitochondrial membrane respiratory chain NADH dehydrogenase (Complex I) which catalyzes electron transfer from NADH through the respiratory chain, using ubiquinone as an electron acceptor. Essential for the catalytic activity and assembly of complex I. The sequence is that of NADH-ubiquinone oxidoreductase chain 2 from Ailurus fulgens (Himalayan red panda).